A 362-amino-acid polypeptide reads, in one-letter code: MLYNLLYPLADQVPLFNLFKYLTFRTGGAVLTALIVAFLVGPRIIAWLRQWQKQGQPIRADGPESHLLTKKGTPTMGGFMILLALSVSTLLWADLRNQYVWIVLLVTLGYGLIGFWDDYLKVSKKNPKGVPGKAKLVAEIAIALAAAAWVWSLQREPLAGALAVPFFKTVLLQLSWFYLPFAVFIIVGAGNAVNLTDGLDGLAIVPVMIASGVFAIFSYLVGHAVFANYLQIHYVSGSGELAVFCGALVGAGLGFLWFNAPPAMVFMGDTGSLALGGALGAISVVTKHELVLGIVGGLFVLETVSVIVQVASFKLTGKRVFRMAPLHHHFEKKGWAEPTVVIRFWIIATILALAGLATLKLR.

10 consecutive transmembrane segments (helical) span residues 28–48, 75–95, 100–120, 134–154, 170–190, 201–221, 241–261, 265–285, 290–310, and 339–359; these read GAVL…IAWL, TMGG…WADL, VWIV…DDYL, AKLV…WSLQ, VLLQ…VGAG, GLAI…SYLV, LAVF…FNAP, VFMG…ISVV, LVLG…IVQV, and TVVI…LATL.

The protein belongs to the glycosyltransferase 4 family. MraY subfamily. Requires Mg(2+) as cofactor.

The protein resides in the cell inner membrane. It catalyses the reaction UDP-N-acetyl-alpha-D-muramoyl-L-alanyl-gamma-D-glutamyl-meso-2,6-diaminopimeloyl-D-alanyl-D-alanine + di-trans,octa-cis-undecaprenyl phosphate = di-trans,octa-cis-undecaprenyl diphospho-N-acetyl-alpha-D-muramoyl-L-alanyl-D-glutamyl-meso-2,6-diaminopimeloyl-D-alanyl-D-alanine + UMP. It functions in the pathway cell wall biogenesis; peptidoglycan biosynthesis. Catalyzes the initial step of the lipid cycle reactions in the biosynthesis of the cell wall peptidoglycan: transfers peptidoglycan precursor phospho-MurNAc-pentapeptide from UDP-MurNAc-pentapeptide onto the lipid carrier undecaprenyl phosphate, yielding undecaprenyl-pyrophosphoryl-MurNAc-pentapeptide, known as lipid I. In Paramagnetospirillum magneticum (strain ATCC 700264 / AMB-1) (Magnetospirillum magneticum), this protein is Phospho-N-acetylmuramoyl-pentapeptide-transferase.